Here is a 509-residue protein sequence, read N- to C-terminus: MADRAALEELVRLQGAHVRGLKEQKASAEQIEEEVTKLLKLKAQLGQDEGKQKFVLKTPKGTRDYSPRQMAVREKVFDVIIRCFKRHGAEVIDTPVFELKETLTGKYGEDSKLIYDLKDQGGELLSLRYDLTVPFARYLAMNKLTNIKRYHIAKVYRRDNPAMTRGRYREFYQCDFDIAGQFDPMIPDAECLKIMCEILSSLQIGNFLVKVNDRRILDGMFAVCGVPDSKFRTICSSVDKLDKVSWEEVKNEMVGEKGLAPEVADRIGDYVQQHGGVSLVEQLLQDPKLSQNKQAVEGLGDLKLLFEYLILFGIDDKISFDLSLARGLDYYTGVIYEAVLLQMPTQAGEEPLGVGSIAAGGRYDGLVGMFDPKGRKVPCVGLSIGVERIFSIVEQRLEASEEKVRTTETQVLVASAQKKLLEERLKLVSELWDAGIKAELLYKKNPKLLNQLQYCEEAGIPLVAIIGEQELKDGVIKLRSVASREEVDVRREDLVEEIRRRTNQPLSTC.

At alanine 2 the chain carries N-acetylalanine. A WHEP-TRS domain is found at 3–59; that stretch reads DRAALEELVRLQGAHVRGLKEQKASAEQIEEEVTKLLKLKAQLGQDEGKQKFVLKTP. Position 66 is a phosphoserine (serine 66). L-histidine is bound by residues 130–132, arginine 157, glutamine 173, aspartate 177, arginine 326, and 330–331; these read DLT and YY. Serine 356 carries the post-translational modification Phosphoserine.

Belongs to the class-II aminoacyl-tRNA synthetase family. Homodimer.

The protein resides in the cytoplasm. It catalyses the reaction tRNA(His) + L-histidine + ATP = L-histidyl-tRNA(His) + AMP + diphosphate + H(+). Functionally, catalyzes the ATP-dependent ligation of histidine to the 3'-end of its cognate tRNA, via the formation of an aminoacyl-adenylate intermediate (His-AMP). Plays a role in axon guidance. The sequence is that of Histidine--tRNA ligase, cytoplasmic (Hars1) from Mus musculus (Mouse).